A 552-amino-acid polypeptide reads, in one-letter code: MTKYIFITGGVVSSLGKGIAASSLAAILEARGLKVTLTKLDPYINVDPGTMSPFQHGEVFVTEDGAETDLDLGHYERFVRTTMGRANSFTTGQIYENVIRKERRGEYLGATVQVIPHITDEIKRGIRLSAEGYDVALIEIGGTVGDIESLPFLEAIRQMRVDLGEERSLFIHLTLVPYISSAGELKTKPTQHSVKELRTIGIQPDILICRSDRPIPKSECRKIALFTNVQEDAVIASVDADTIYRIPALLHEQQLDEIVVRKLRLDAGPADLSEWHRVVDALQNPERSVTVAMVGKYVNHSDAYKSLSEALVHAGIHTRTRVDIRFIESEEIEDHGTGALEGVDAILVPGGFGERGIEGKIAAVKYAREHRVPYLGICLGMQVAVIEFARNVAGLEGAHSTEFLPSSPHPVIALITEWKTEAGGIEYRSGDSDLGGTMRLGGQKCRLVPNTLAHATYGKDVITERHRHRYEFNNHYLKTLEAAGLRVSGKSLDGRLVEMVEIPEHPWFLACQFHPEFTSTPRGGHPLFSGFVRAARARSEGTSPPESGGAQP.

The amidoligase domain stretch occupies residues 1-265; the sequence is MTKYIFITGG…DEIVVRKLRL (265 aa). Ser13 serves as a coordination point for CTP. UTP is bound at residue Ser13. ATP is bound by residues 14–19 and Asp71; that span reads SLGKGI. Positions 71 and 139 each coordinate Mg(2+). CTP contacts are provided by residues 146–148, 186–191, and Lys222; these read DIE and KTKPTQ. Residues 186–191 and Lys222 contribute to the UTP site; that span reads KTKPTQ. The Glutamine amidotransferase type-1 domain maps to 290-541; the sequence is TVAMVGKYVN…VRAARARSEG (252 aa). Gly351 serves as a coordination point for L-glutamine. Cys378 serves as the catalytic Nucleophile; for glutamine hydrolysis. L-glutamine-binding positions include 379-382, Glu402, and Arg469; that span reads LGMQ. Residues His514 and Glu516 contribute to the active site.

Belongs to the CTP synthase family. In terms of assembly, homotetramer.

The catalysed reaction is UTP + L-glutamine + ATP + H2O = CTP + L-glutamate + ADP + phosphate + 2 H(+). It catalyses the reaction L-glutamine + H2O = L-glutamate + NH4(+). The enzyme catalyses UTP + NH4(+) + ATP = CTP + ADP + phosphate + 2 H(+). It participates in pyrimidine metabolism; CTP biosynthesis via de novo pathway; CTP from UDP: step 2/2. With respect to regulation, allosterically activated by GTP, when glutamine is the substrate; GTP has no effect on the reaction when ammonia is the substrate. The allosteric effector GTP functions by stabilizing the protein conformation that binds the tetrahedral intermediate(s) formed during glutamine hydrolysis. Inhibited by the product CTP, via allosteric rather than competitive inhibition. Functionally, catalyzes the ATP-dependent amination of UTP to CTP with either L-glutamine or ammonia as the source of nitrogen. Regulates intracellular CTP levels through interactions with the four ribonucleotide triphosphates. This is CTP synthase from Methylococcus capsulatus (strain ATCC 33009 / NCIMB 11132 / Bath).